Here is a 243-residue protein sequence, read N- to C-terminus: Leucyl/phenylalanyl-tRNA--protein transferase (243 aa).

The protein belongs to the L/F-transferase family.

The protein resides in the cytoplasm. It carries out the reaction N-terminal L-lysyl-[protein] + L-leucyl-tRNA(Leu) = N-terminal L-leucyl-L-lysyl-[protein] + tRNA(Leu) + H(+). It catalyses the reaction N-terminal L-arginyl-[protein] + L-leucyl-tRNA(Leu) = N-terminal L-leucyl-L-arginyl-[protein] + tRNA(Leu) + H(+). The catalysed reaction is L-phenylalanyl-tRNA(Phe) + an N-terminal L-alpha-aminoacyl-[protein] = an N-terminal L-phenylalanyl-L-alpha-aminoacyl-[protein] + tRNA(Phe). Functionally, functions in the N-end rule pathway of protein degradation where it conjugates Leu, Phe and, less efficiently, Met from aminoacyl-tRNAs to the N-termini of proteins containing an N-terminal arginine or lysine. This Xylella fastidiosa (strain 9a5c) protein is Leucyl/phenylalanyl-tRNA--protein transferase.